A 143-amino-acid polypeptide reads, in one-letter code: Cell division protein SepF (143 aa).

Belongs to the SepF family. In terms of assembly, homodimer. Interacts with FtsZ.

The protein resides in the cytoplasm. In terms of biological role, cell division protein that is part of the divisome complex and is recruited early to the Z-ring. Probably stimulates Z-ring formation, perhaps through the cross-linking of FtsZ protofilaments. Its function overlaps with FtsA. In Geobacillus thermodenitrificans (strain NG80-2), this protein is Cell division protein SepF.